The sequence spans 163 residues: ATP synthase subunit b 1 (163 aa).

The chain crosses the membrane as a helical span at residues 7–27 (PETWVAIAFVILMGLFAYLGV).

The protein belongs to the ATPase B chain family. As to quaternary structure, F-type ATPases have 2 components, F(1) - the catalytic core - and F(0) - the membrane proton channel. F(1) has five subunits: alpha(3), beta(3), gamma(1), delta(1), epsilon(1). F(0) has three main subunits: a(1), b(2) and c(10-14). The alpha and beta chains form an alternating ring which encloses part of the gamma chain. F(1) is attached to F(0) by a central stalk formed by the gamma and epsilon chains, while a peripheral stalk is formed by the delta and b chains.

It is found in the cell inner membrane. Its function is as follows. F(1)F(0) ATP synthase produces ATP from ADP in the presence of a proton or sodium gradient. F-type ATPases consist of two structural domains, F(1) containing the extramembraneous catalytic core and F(0) containing the membrane proton channel, linked together by a central stalk and a peripheral stalk. During catalysis, ATP synthesis in the catalytic domain of F(1) is coupled via a rotary mechanism of the central stalk subunits to proton translocation. Component of the F(0) channel, it forms part of the peripheral stalk, linking F(1) to F(0). The polypeptide is ATP synthase subunit b 1 (Bradyrhizobium sp. (strain BTAi1 / ATCC BAA-1182)).